The primary structure comprises 505 residues: Lysine--tRNA ligase 1 (505 aa).

D415 and E422 together coordinate Mg(2+).

The protein belongs to the class-II aminoacyl-tRNA synthetase family. As to quaternary structure, homodimer. Mg(2+) is required as a cofactor.

The protein resides in the cytoplasm. It carries out the reaction tRNA(Lys) + L-lysine + ATP = L-lysyl-tRNA(Lys) + AMP + diphosphate. The sequence is that of Lysine--tRNA ligase 1 (lysS1) from Mycobacterium bovis (strain ATCC BAA-935 / AF2122/97).